A 193-amino-acid polypeptide reads, in one-letter code: dTTP/UTP pyrophosphatase (193 aa).

Aspartate 77 serves as the catalytic Proton acceptor.

It belongs to the Maf family. YhdE subfamily. The cofactor is a divalent metal cation.

The protein localises to the cytoplasm. The enzyme catalyses dTTP + H2O = dTMP + diphosphate + H(+). It catalyses the reaction UTP + H2O = UMP + diphosphate + H(+). In terms of biological role, nucleoside triphosphate pyrophosphatase that hydrolyzes dTTP and UTP. May have a dual role in cell division arrest and in preventing the incorporation of modified nucleotides into cellular nucleic acids. This is dTTP/UTP pyrophosphatase from Phocaeicola vulgatus (strain ATCC 8482 / DSM 1447 / JCM 5826 / CCUG 4940 / NBRC 14291 / NCTC 11154) (Bacteroides vulgatus).